Consider the following 130-residue polypeptide: Small ribosomal subunit protein uS8 (130 aa).

The protein belongs to the universal ribosomal protein uS8 family. Part of the 30S ribosomal subunit. Contacts proteins S5 and S12.

Functionally, one of the primary rRNA binding proteins, it binds directly to 16S rRNA central domain where it helps coordinate assembly of the platform of the 30S subunit. The sequence is that of Small ribosomal subunit protein uS8 from Aliivibrio salmonicida (strain LFI1238) (Vibrio salmonicida (strain LFI1238)).